Reading from the N-terminus, the 423-residue chain is Torsin-4A (423 aa).

Positions Pro-47–Arg-68 are disordered. Phosphoserine occurs at positions 63 and 81. Position 89 is a phosphothreonine (Thr-89). Ser-106 bears the Phosphoserine mark. The chain crosses the membrane as a helical span at residues Cys-122–Ile-138. Residue Gly-194–Ser-201 coordinates ATP.

This sequence belongs to the ClpA/ClpB family. Torsin subfamily.

The protein resides in the membrane. This chain is Torsin-4A (TOR4A), found in Homo sapiens (Human).